The chain runs to 104 residues: Iron-sulfur cluster assembly protein CyaY (104 aa).

This sequence belongs to the frataxin family.

In terms of biological role, involved in iron-sulfur (Fe-S) cluster assembly. May act as a regulator of Fe-S biogenesis. This is Iron-sulfur cluster assembly protein CyaY from Aliivibrio salmonicida (strain LFI1238) (Vibrio salmonicida (strain LFI1238)).